The sequence spans 244 residues: Small ribosomal subunit protein eS4 (244 aa).

The S4 RNA-binding domain occupies 43–106 (LPLLLVVRDV…DETYLVLFDE (64 aa)).

This sequence belongs to the eukaryotic ribosomal protein eS4 family.

The polypeptide is Small ribosomal subunit protein eS4 (Methanococcus maripaludis (strain DSM 14266 / JCM 13030 / NBRC 101832 / S2 / LL)).